The primary structure comprises 370 residues: Gibberellin 3-beta-dioxygenase 2-1 (370 aa).

A Fe2OG dioxygenase domain is found at 205–306 (MTATMHLNWY…RISLGYFLGP (102 aa)). Fe cation-binding residues include histidine 229, aspartate 231, and histidine 287. Residue arginine 297 is part of the active site.

This sequence belongs to the iron/ascorbate-dependent oxidoreductase family. GA3OX subfamily. L-ascorbate is required as a cofactor. It depends on Fe cation as a cofactor. In terms of tissue distribution, expressed in internodes, nodes and the ear of the elongating stem.

The catalysed reaction is gibberellin A20 + 2-oxoglutarate + O2 = gibberellin A1 + succinate + CO2. In terms of biological role, converts the inactive gibberellin precursors GA9 and GA20 in the bioactives gibberellins GA4 and GA1. Also accepts GA15, GA44, the 2,3-unsaturated GA5 and 2,3-dihydroGA9 as substrate. No activity with GA12, GA53, GA24, GA19 and GA25. Also possesses 2-beta-hydroxylase, 2,3-desaturase, 2,3-epoxidase and 13-hydroxylase activities. In Triticum aestivum (Wheat), this protein is Gibberellin 3-beta-dioxygenase 2-1 (GA3ox2-1).